Reading from the N-terminus, the 244-residue chain is Phosphoadenosine 5'-phosphosulfate reductase (244 aa).

Cysteine 239 functions as the Nucleophile; cysteine thiosulfonate intermediate in the catalytic mechanism.

This sequence belongs to the PAPS reductase family. CysH subfamily.

It localises to the cytoplasm. The enzyme catalyses [thioredoxin]-disulfide + sulfite + adenosine 3',5'-bisphosphate + 2 H(+) = [thioredoxin]-dithiol + 3'-phosphoadenylyl sulfate. The protein operates within sulfur metabolism; hydrogen sulfide biosynthesis; sulfite from sulfate: step 3/3. Functionally, catalyzes the formation of sulfite from phosphoadenosine 5'-phosphosulfate (PAPS) using thioredoxin as an electron donor. This Escherichia coli (strain K12 / MC4100 / BW2952) protein is Phosphoadenosine 5'-phosphosulfate reductase.